The sequence spans 237 residues: Phosphoribosylaminoimidazole-succinocarboxamide synthase (237 aa).

This sequence belongs to the SAICAR synthetase family.

The catalysed reaction is 5-amino-1-(5-phospho-D-ribosyl)imidazole-4-carboxylate + L-aspartate + ATP = (2S)-2-[5-amino-1-(5-phospho-beta-D-ribosyl)imidazole-4-carboxamido]succinate + ADP + phosphate + 2 H(+). Its pathway is purine metabolism; IMP biosynthesis via de novo pathway; 5-amino-1-(5-phospho-D-ribosyl)imidazole-4-carboxamide from 5-amino-1-(5-phospho-D-ribosyl)imidazole-4-carboxylate: step 1/2. This Psychrobacter cryohalolentis (strain ATCC BAA-1226 / DSM 17306 / VKM B-2378 / K5) protein is Phosphoribosylaminoimidazole-succinocarboxamide synthase.